Consider the following 532-residue polypeptide: MDSKKRSHSTGGEAENMESQESKAKRKPLQKHQFSKSNVVQKEEKDKTEGEEKGAEGLQEVVRQSRLRTAPSVLEFRFNKQRVRLISQDCHLQDQSQAFVYWMSRDQRVQDNWAFLYAQRLALKQKLPLHVCFCLAPCFLGATIRHYDFMLRGLEEVAEECEKLCIPFHLLLGLPKDVLPAFVQTHGIGGIVTDFSPLLHHTQWVKDVQDALPRQVPFVQVDAHNIVPCWVASDKQEYGARTIRHKIHDRLPHFLTEFPPVICHPYTSNVQAEPVDWNGCRAGLQVDRSVKEVSWAKPGTASGLTMLQSFIAERLPYFGSDRNNPNKDALSNLSPWFHFGQVSVQRAILEVQKHRSRYPDSVTNFVEEAVVRRELADNFCFYNKNYDKLEGAYDWAQTTLRLHAKDKRPHLYSLEQLESGKTHDPLWNAAQMQTVKEGKMHGFLRMYWAKKILEWTRSPEEALEFAIYLNDRFQLDGWDPNGYVGCMWSICGIHDQGWAEREIFGKIRYMNYAGCKRKFDVAEFERKISPAD.

Residues 1–57 (MDSKKRSHSTGGEAENMESQESKAKRKPLQKHQFSKSNVVQKEEKDKTEGEEKGAEG) form a disordered region. The segment covering 24-34 (AKRKPLQKHQF) has biased composition (basic residues). Residues 41-55 (QKEEKDKTEGEEKGA) show a composition bias toward basic and acidic residues. One can recognise a Photolyase/cryptochrome alpha/beta domain in the interval 97-229 (QAFVYWMSRD…QVDAHNIVPC (133 aa)). Arginine 322 contacts DNA. Interaction with DNA regions lie at residues 368 to 376 (EAVVRRELA) and 442 to 443 (GF). 468-470 (YLN) contacts FAD.

The protein belongs to the DNA photolyase class-2 family. FAD serves as cofactor.

The catalysed reaction is cyclobutadipyrimidine (in DNA) = 2 pyrimidine residues (in DNA).. Involved in repair of UV radiation-induced DNA damage. Catalyzes the light-dependent monomerization (300-600 nm) of cyclobutyl pyrimidine dimers (in cis-syn configuration), which are formed between adjacent bases on the same DNA strand upon exposure to ultraviolet radiation. This Potorous tridactylus (Potoroo) protein is Deoxyribodipyrimidine photo-lyase (PHR).